Consider the following 276-residue polypeptide: NAD-capped RNA hydrolase NudC (276 aa).

Residue R82 participates in substrate binding. Zn(2+) is bound by residues C112 and C115. E125 provides a ligand contact to substrate. The Zn(2+) site is built by C130 and C133. Y138 lines the substrate pocket. Residues 139-262 (PRISPSMIVL…SIARYLIDLY (124 aa)) form the Nudix hydrolase domain. A172, E188, and E192 together coordinate a divalent metal cation. Positions 173–194 (GFAEPGESAEECLVREVREEVA) match the Nudix box motif. Residue 206–213 (QCWPFPHS) coordinates substrate. E233 is a binding site for a divalent metal cation. Residue A255 coordinates substrate.

The protein belongs to the Nudix hydrolase family. NudC subfamily. In terms of assembly, homodimer. It depends on Mg(2+) as a cofactor. Mn(2+) serves as cofactor. The cofactor is Zn(2+).

The enzyme catalyses a 5'-end NAD(+)-phospho-ribonucleoside in mRNA + H2O = a 5'-end phospho-adenosine-phospho-ribonucleoside in mRNA + beta-nicotinamide D-ribonucleotide + 2 H(+). It carries out the reaction NAD(+) + H2O = beta-nicotinamide D-ribonucleotide + AMP + 2 H(+). The catalysed reaction is NADH + H2O = reduced beta-nicotinamide D-ribonucleotide + AMP + 2 H(+). MRNA decapping enzyme that specifically removes the nicotinamide adenine dinucleotide (NAD) cap from a subset of mRNAs by hydrolyzing the diphosphate linkage to produce nicotinamide mononucleotide (NMN) and 5' monophosphate mRNA. The NAD-cap is present at the 5'-end of some mRNAs and stabilizes RNA against 5'-processing. Has preference for mRNAs with a 5'-end purine. Catalyzes the hydrolysis of a broad range of dinucleotide pyrophosphates. This Pseudomonas entomophila (strain L48) protein is NAD-capped RNA hydrolase NudC.